The primary structure comprises 466 residues: Fumarate hydratase class II (466 aa).

Substrate-binding positions include 100–102 (SGT), Arg128, 131–134 (HPND), 141–143 (SSN), and Thr189. Basic and acidic residues predominate over residues 122–137 (GERGERRKVHPNDDVN). A disordered region spans residues 122-143 (GERGERRKVHPNDDVNKGQSSN). His190 functions as the Proton donor/acceptor in the catalytic mechanism. Residue Ser320 is part of the active site. Residues Ser321 and 326 to 328 (KVN) each bind substrate.

The protein belongs to the class-II fumarase/aspartase family. Fumarase subfamily. As to quaternary structure, homotetramer.

It localises to the cytoplasm. The catalysed reaction is (S)-malate = fumarate + H2O. It participates in carbohydrate metabolism; tricarboxylic acid cycle; (S)-malate from fumarate: step 1/1. Functionally, involved in the TCA cycle. Catalyzes the stereospecific interconversion of fumarate to L-malate. In Myxococcus xanthus (strain DK1622), this protein is Fumarate hydratase class II.